The following is a 277-amino-acid chain: Thiazole synthase (277 aa).

Catalysis depends on K107, which acts as the Schiff-base intermediate with DXP. Residues G168, 194–195 (AG), and 216–217 (AS) each bind 1-deoxy-D-xylulose 5-phosphate.

The protein belongs to the ThiG family. As to quaternary structure, homotetramer. Forms heterodimers with either ThiH or ThiS.

It is found in the cytoplasm. It carries out the reaction [ThiS sulfur-carrier protein]-C-terminal-Gly-aminoethanethioate + 2-iminoacetate + 1-deoxy-D-xylulose 5-phosphate = [ThiS sulfur-carrier protein]-C-terminal Gly-Gly + 2-[(2R,5Z)-2-carboxy-4-methylthiazol-5(2H)-ylidene]ethyl phosphate + 2 H2O + H(+). The protein operates within cofactor biosynthesis; thiamine diphosphate biosynthesis. Functionally, catalyzes the rearrangement of 1-deoxy-D-xylulose 5-phosphate (DXP) to produce the thiazole phosphate moiety of thiamine. Sulfur is provided by the thiocarboxylate moiety of the carrier protein ThiS. In vitro, sulfur can be provided by H(2)S. This is Thiazole synthase from Cutibacterium acnes (strain DSM 16379 / KPA171202) (Propionibacterium acnes).